A 490-amino-acid chain; its full sequence is Cobyric acid synthase (490 aa).

Positions 253-440 constitute a GATase cobBQ-type domain; sequence KLRVAAPAAP…LHGVFDEPAA (188 aa). The Nucleophile role is filled by C334. H432 is a catalytic residue.

The protein belongs to the CobB/CobQ family. CobQ subfamily.

The protein operates within cofactor biosynthesis; adenosylcobalamin biosynthesis. Its function is as follows. Catalyzes amidations at positions B, D, E, and G on adenosylcobyrinic A,C-diamide. NH(2) groups are provided by glutamine, and one molecule of ATP is hydrogenolyzed for each amidation. The protein is Cobyric acid synthase of Chromobacterium violaceum (strain ATCC 12472 / DSM 30191 / JCM 1249 / CCUG 213 / NBRC 12614 / NCIMB 9131 / NCTC 9757 / MK).